The following is a 348-amino-acid chain: Probable dual-specificity RNA methyltransferase RlmN (348 aa).

Catalysis depends on Glu-93, which acts as the Proton acceptor. One can recognise a Radical SAM core domain in the interval 99 to 333; that stretch reads TEKRLTACLS…VSLRKSRGLD (235 aa). An intrachain disulfide couples Cys-106 to Cys-338. Cys-113, Cys-117, and Cys-120 together coordinate [4Fe-4S] cluster. Residues 160-161, Ser-190, 219-221, and Asn-295 each bind S-adenosyl-L-methionine; these read GE and SLH. Cys-338 serves as the catalytic S-methylcysteine intermediate.

This sequence belongs to the radical SAM superfamily. RlmN family. [4Fe-4S] cluster serves as cofactor.

It localises to the cytoplasm. The enzyme catalyses adenosine(2503) in 23S rRNA + 2 reduced [2Fe-2S]-[ferredoxin] + 2 S-adenosyl-L-methionine = 2-methyladenosine(2503) in 23S rRNA + 5'-deoxyadenosine + L-methionine + 2 oxidized [2Fe-2S]-[ferredoxin] + S-adenosyl-L-homocysteine. It carries out the reaction adenosine(37) in tRNA + 2 reduced [2Fe-2S]-[ferredoxin] + 2 S-adenosyl-L-methionine = 2-methyladenosine(37) in tRNA + 5'-deoxyadenosine + L-methionine + 2 oxidized [2Fe-2S]-[ferredoxin] + S-adenosyl-L-homocysteine. Functionally, specifically methylates position 2 of adenine 2503 in 23S rRNA and position 2 of adenine 37 in tRNAs. This chain is Probable dual-specificity RNA methyltransferase RlmN, found in Prochlorococcus marinus (strain MIT 9215).